The primary structure comprises 778 residues: IQ domain-containing protein E (778 aa).

Disordered stretches follow at residues 1-71 (MSLG…LSSR) and 83-108 (SSKQGSVAQPPSPTLTSEHAWTHPPS). The span at 37-49 (KPPSTSPKSPYYS) shows a compositional bias: low complexity. The span at 83–101 (SSKQGSVAQPPSPTLTSEH) shows a compositional bias: polar residues. Residues 157 to 323 (LHMQKSDVDL…DLDRMLSNSP (167 aa)) are a coiled coil. At serine 322 the chain carries Phosphoserine. Disordered stretches follow at residues 348-392 (KKVS…EDLP), 443-462 (ETAREGEKGRQEQEQALREE), 474-529 (EEAK…SEER), and 573-612 (LVRSKVPDSRSPSLPGLLSPLNQSSPAPRVLSPISPAEEN). The segment covering 352–362 (SSESPKQSTSE) has biased composition (low complexity). A coiled-coil region spans residues 398-486 (EEQEHLQGTV…KREEKNSFVA (89 aa)). IQ domains follow at residues 553-582 (LDEAATVLQAAFRGHLARSKLVRSKVPDSR) and 615-644 (QEEAVIVIQSILRGYLAQARFIASCCREIA). Over residues 581 to 598 (SRSPSLPGLLSPLNQSSP) the composition is skewed to low complexity. Polar residues predominate over residues 651–662 (TVSLTPSGSASP). The segment at 651–778 (TVSLTPSGSA…LPRKKSPSPF (128 aa)) is disordered. Serine 661 carries the phosphoserine modification. Over residues 672–686 (IRKELCASEELRETS) the composition is skewed to basic and acidic residues. Residues 739–752 (PSPPELQPLSPPPV) are compositionally biased toward pro residues.

As to quaternary structure, component of the EvC complex composed of EFCAB7, IQCE, EVC2 and EVC; built from two subcomplexes, EVC2:EVC and EFCAB7:IQCE. Interacts (via N-terminus) with EFCAB7 (via EF-hands 1 and 2); this interaction anchors the EVC-EVC2 complex in a signaling microdomain at the base of cilia and stimulates the Hedgehog (Hh) pathway. Interacts with EVC2 (via N-terminal end). Interacts with EVC.

It localises to the cell projection. It is found in the cilium membrane. In terms of biological role, component of the EvC complex that positively regulates ciliary Hedgehog (Hh) signaling. Required for proper limb morphogenesis. This Mus musculus (Mouse) protein is IQ domain-containing protein E (Iqce).